A 153-amino-acid chain; its full sequence is Actin-related protein 2/3 complex subunit 5-like protein (153 aa).

Serine 64 carries the phosphoserine modification.

It belongs to the ARPC5 family. May be a component of the Arp2/3 complex in which it may replace ARPC5.

The protein localises to the cytoplasm. It localises to the cytoskeleton. In terms of biological role, may function as component of the Arp2/3 complex which is involved in regulation of actin polymerization and together with an activating nucleation-promoting factor (NPF) mediates the formation of branched actin networks. This is Actin-related protein 2/3 complex subunit 5-like protein (Arpc5l) from Rattus norvegicus (Rat).